The sequence spans 190 residues: Cytoglobin (190 aa).

Residues 1–21 (MEKVPGDMEIERRERNEELSE) are disordered. The 150-residue stretch at 18–167 (ELSEAERKAV…IYSHVTAAYK (150 aa)) folds into the Globin domain. C38 and C83 are joined by a disulfide. Heme b-binding residues include H81 and H113.

It belongs to the globin family. In terms of assembly, monomeric. Homodimer; disulfide-linked in vitro. Also homooligomeric in vitro. Post-translationally, the formation of an intramolecular disulfide bond between cysteines Cys-38 and Cys-83 specifically enhances the nitrite reductase activity. As to expression, widely expressed (at protein level).

The protein localises to the cytoplasm. Its subcellular location is the nucleus. It catalyses the reaction Fe(II)-heme b-[protein] + nitric oxide + O2 = Fe(III)-heme b-[protein] + nitrate. The enzyme catalyses Fe(III)-heme b-[protein] + nitric oxide + H2O = Fe(II)-heme b-[protein] + nitrite + 2 H(+). It carries out the reaction 2 superoxide + 2 H(+) = H2O2 + O2. The catalysed reaction is H2O2 + AH2 = A + 2 H2O. Its activity is regulated as follows. The nitric oxide dioxygenase activity is activated by a reducing system composed of cytochrome b5, its upstream reductase CYB5R3 and NADH. Functionally, probable multifunctional globin with a hexacoordinated heme iron required for the catalysis of various reactions depending on redox condition of the cell as well as oxygen availability. Has a nitric oxide dioxygenase (NOD) activity and is most probably involved in cell-mediated and oxygen-dependent nitric oxide consumption. By scavenging this second messenger may regulate several biological processes including endothelium-mediated vasodilation and vascular tone. Under normoxic conditions functions as a nitric oxide dioxygenase (NOD) but under hypoxic conditions the globin may switch its function to that of a nitrite (NO2) reductase (NiR), generating nitric oxide. Could also have peroxidase and superoxide dismutase activities, detoxifying reactive oxygen species and protecting cells against oxidative stress. Also binds dioxygen with low affinity and could function as an oxygen sensor but has probably no function as a respiratory oxygen carrier. This Rattus norvegicus (Rat) protein is Cytoglobin.